Here is a 487-residue protein sequence, read N- to C-terminus: Probable aspartic-type endopeptidase opsB (487 aa).

An N-terminal signal peptide occupies residues 1-20 (MQKSWLVLLVACLGLQGTTA). The Peptidase A1 domain occupies 69–398 (YFCNITLGTP…DLSNNEISLA (330 aa)). Asparagine 72 carries an N-linked (GlcNAc...) asparagine glycan. Aspartate 87 is a catalytic residue. 4 N-linked (GlcNAc...) asparagine glycosylation sites follow: asparagine 99, asparagine 111, asparagine 132, and asparagine 272. Aspartate 286 is a catalytic residue. Residues asparagine 329 and asparagine 403 are each glycosylated (N-linked (GlcNAc...) asparagine). Alanine 463 carries GPI-anchor amidated alanine lipidation. Positions 464–487 (PAGPTDVPKHLVLGAAAIGYVLAF) are cleaved as a propeptide — removed in mature form.

It belongs to the peptidase A1 family.

The protein localises to the cell membrane. Functionally, probable GPI-anchored aspartic-type endopeptidase. In Aspergillus oryzae (strain ATCC 42149 / RIB 40) (Yellow koji mold), this protein is Probable aspartic-type endopeptidase opsB (opsB).